A 345-amino-acid polypeptide reads, in one-letter code: Holliday junction branch migration complex subunit RuvB (345 aa).

Residues 1–186 (MSTDPDEREV…FGFTAHMDFY (186 aa)) form a large ATPase domain (RuvB-L) region. Residues Leu25, Arg26, Gly67, Lys70, Thr71, Ser72, 133–135 (EDF), Arg176, Tyr186, and Arg223 contribute to the ATP site. A Mg(2+)-binding site is contributed by Thr71. A small ATPAse domain (RuvB-S) region spans residues 187-257 (EPAELERVLV…VAKAALAVYD (71 aa)). Residues 260 to 345 (ELGLDRLDRA…AGANQPGLFE (86 aa)) are head domain (RuvB-H). DNA-binding residues include Arg315 and Arg320.

This sequence belongs to the RuvB family. As to quaternary structure, homohexamer. Forms an RuvA(8)-RuvB(12)-Holliday junction (HJ) complex. HJ DNA is sandwiched between 2 RuvA tetramers; dsDNA enters through RuvA and exits via RuvB. An RuvB hexamer assembles on each DNA strand where it exits the tetramer. Each RuvB hexamer is contacted by two RuvA subunits (via domain III) on 2 adjacent RuvB subunits; this complex drives branch migration. In the full resolvosome a probable DNA-RuvA(4)-RuvB(12)-RuvC(2) complex forms which resolves the HJ.

The protein resides in the cytoplasm. The enzyme catalyses ATP + H2O = ADP + phosphate + H(+). In terms of biological role, the RuvA-RuvB-RuvC complex processes Holliday junction (HJ) DNA during genetic recombination and DNA repair, while the RuvA-RuvB complex plays an important role in the rescue of blocked DNA replication forks via replication fork reversal (RFR). RuvA specifically binds to HJ cruciform DNA, conferring on it an open structure. The RuvB hexamer acts as an ATP-dependent pump, pulling dsDNA into and through the RuvAB complex. RuvB forms 2 homohexamers on either side of HJ DNA bound by 1 or 2 RuvA tetramers; 4 subunits per hexamer contact DNA at a time. Coordinated motions by a converter formed by DNA-disengaged RuvB subunits stimulates ATP hydrolysis and nucleotide exchange. Immobilization of the converter enables RuvB to convert the ATP-contained energy into a lever motion, pulling 2 nucleotides of DNA out of the RuvA tetramer per ATP hydrolyzed, thus driving DNA branch migration. The RuvB motors rotate together with the DNA substrate, which together with the progressing nucleotide cycle form the mechanistic basis for DNA recombination by continuous HJ branch migration. Branch migration allows RuvC to scan DNA until it finds its consensus sequence, where it cleaves and resolves cruciform DNA. This chain is Holliday junction branch migration complex subunit RuvB, found in Mycobacterium marinum (strain ATCC BAA-535 / M).